The primary structure comprises 599 residues: BICD family-like cargo adapter 1 (599 aa).

The disordered stretch occupies residues 1–27 (MELPISFLSDSSRPAASSERGDQAALG). A CC1 box motif is present at residues 76-80 (AARLG). The stretch at 80–341 (GKALLERNQD…WEAHCQVRSL (262 aa)) forms a coiled coil. The disordered stretch occupies residues 352–375 (DSAVSTDSSMDESSETSSAKDVPA). Residues 405 to 536 (EDDGLEEQIK…LEAWQDDMHR (132 aa)) adopt a coiled-coil conformation.

Belongs to the BICDR family. As to quaternary structure, part of a tripartite complex with dynein and dynactin, acts an adapter linking the dynein motor complex and dynactin. Interacts with KIF1C. Interacts with RAB6A and RAB6B; interaction is specific to Rab6.

The protein resides in the cytoplasm. Its subcellular location is the cytoskeleton. It localises to the microtubule organizing center. The protein localises to the centrosome. Functionally, acts as an adapter protein linking the dynein motor complex to various cargos and converts dynein from a non-processive to a highly processive motor in the presence of dynactin. Facilitates the interaction between dynein and dynactin and activates dynein processivity (the ability to move along a microtubule for a long distance without falling off the track). Predominantly recruits 2 dyneins, which increases both the force and speed of the microtubule motor. Component of secretory vesicle machinery in developing neurons that acts as a regulator of neurite outgrowth. Regulates the secretory vesicle transport by controlling the accumulation of Rab6-containing secretory vesicles in the pericentrosomal region restricting anterograde secretory transport during the early phase of neuronal differentiation, thereby inhibiting neuritogenesis. The polypeptide is BICD family-like cargo adapter 1 (bicdl1) (Xenopus tropicalis (Western clawed frog)).